Here is a 162-residue protein sequence, read N- to C-terminus: Protein-export protein SecB 2 (162 aa).

Belongs to the SecB family. In terms of assembly, homotetramer, a dimer of dimers. One homotetramer interacts with 1 SecA dimer.

It is found in the cytoplasm. Its function is as follows. One of the proteins required for the normal export of preproteins out of the cell cytoplasm. It is a molecular chaperone that binds to a subset of precursor proteins, maintaining them in a translocation-competent state. It also specifically binds to its receptor SecA. The chain is Protein-export protein SecB 2 from Polaromonas naphthalenivorans (strain CJ2).